A 259-amino-acid polypeptide reads, in one-letter code: Acyl-[acyl-carrier-protein]--UDP-N-acetylglucosamine O-acyltransferase (259 aa).

This sequence belongs to the transferase hexapeptide repeat family. LpxA subfamily. Homotrimer.

Its subcellular location is the cytoplasm. The enzyme catalyses a (3R)-hydroxyacyl-[ACP] + UDP-N-acetyl-alpha-D-glucosamine = a UDP-3-O-[(3R)-3-hydroxyacyl]-N-acetyl-alpha-D-glucosamine + holo-[ACP]. It functions in the pathway glycolipid biosynthesis; lipid IV(A) biosynthesis; lipid IV(A) from (3R)-3-hydroxytetradecanoyl-[acyl-carrier-protein] and UDP-N-acetyl-alpha-D-glucosamine: step 1/6. Its function is as follows. Involved in the biosynthesis of lipid A, a phosphorylated glycolipid that anchors the lipopolysaccharide to the outer membrane of the cell. This is Acyl-[acyl-carrier-protein]--UDP-N-acetylglucosamine O-acyltransferase from Nautilia profundicola (strain ATCC BAA-1463 / DSM 18972 / AmH).